A 258-amino-acid polypeptide reads, in one-letter code: Imidazole glycerol phosphate synthase subunit HisF (258 aa).

Residues D11 and D130 contribute to the active site.

It belongs to the HisA/HisF family. As to quaternary structure, heterodimer of HisH and HisF.

The protein localises to the cytoplasm. It carries out the reaction 5-[(5-phospho-1-deoxy-D-ribulos-1-ylimino)methylamino]-1-(5-phospho-beta-D-ribosyl)imidazole-4-carboxamide + L-glutamine = D-erythro-1-(imidazol-4-yl)glycerol 3-phosphate + 5-amino-1-(5-phospho-beta-D-ribosyl)imidazole-4-carboxamide + L-glutamate + H(+). The protein operates within amino-acid biosynthesis; L-histidine biosynthesis; L-histidine from 5-phospho-alpha-D-ribose 1-diphosphate: step 5/9. In terms of biological role, IGPS catalyzes the conversion of PRFAR and glutamine to IGP, AICAR and glutamate. The HisF subunit catalyzes the cyclization activity that produces IGP and AICAR from PRFAR using the ammonia provided by the HisH subunit. In Blochmanniella pennsylvanica (strain BPEN), this protein is Imidazole glycerol phosphate synthase subunit HisF.